The following is a 483-amino-acid chain: FAD-dependent oxidoreductase oblC (483 aa).

A signal peptide spans 1-21 (MRSVTSLVSFSACLLASSVTA). Residues Asn-100, Asn-137, Asn-190, and Asn-240 are each glycosylated (N-linked (GlcNAc...) asparagine).

Belongs to the beta-cyclopiazonate dehydrogenase family. It depends on FAD as a cofactor.

The protein operates within secondary metabolite biosynthesis; terpenoid biosynthesis. FAD-dependent oxidoreductase; part of the gene cluster that mediates the biosynthesis of the sesterterpenes ophiobolins, fungal phytotoxins with potential anti-cancer activities. The first step of the pathway is performed by the sesterterpene synthase oblA that possesses both prenyl transferase and terpene cyclase activity, converting isopentenyl diphosphate and dimethylallyl diphosphate into geranylfarnesyl diphosphate (GFPP) and further converting GFPP into ophiobolin F, respectively. Other sesterterpenoids (C(25) terpenoids) are found as minor products of oblA. The cytochrome P450 monooxygenase oblB then catalyzes a four-step oxidative transformation of ophiobolin F to yield ophiobolin C. The FAD-dependent oxidoreductase oblC might be involved in a later oxidation step that produces ophiobolin A. This is FAD-dependent oxidoreductase oblC from Cochliobolus heterostrophus (strain C5 / ATCC 48332 / race O) (Southern corn leaf blight fungus).